Here is a 57-residue protein sequence, read N- to C-terminus: uncharacterized protein (57 aa).

Residues 12-34 (VIAVLSLFVFAVAVFFVGMALLT) traverse the membrane as a helical segment.

It is found in the membrane. This is an uncharacterized protein from Pasteurella multocida (strain Pm70).